We begin with the raw amino-acid sequence, 148 residues long: Large ribosomal subunit protein bL9 (148 aa).

The protein belongs to the bacterial ribosomal protein bL9 family.

Functionally, binds to the 23S rRNA. This Bacillus mycoides (strain KBAB4) (Bacillus weihenstephanensis) protein is Large ribosomal subunit protein bL9.